We begin with the raw amino-acid sequence, 195 residues long: 3-isopropylmalate dehydratase small subunit (195 aa).

It belongs to the LeuD family. LeuD type 1 subfamily. In terms of assembly, heterodimer of LeuC and LeuD.

The catalysed reaction is (2R,3S)-3-isopropylmalate = (2S)-2-isopropylmalate. It functions in the pathway amino-acid biosynthesis; L-leucine biosynthesis; L-leucine from 3-methyl-2-oxobutanoate: step 2/4. Catalyzes the isomerization between 2-isopropylmalate and 3-isopropylmalate, via the formation of 2-isopropylmaleate. This Salinispora arenicola (strain CNS-205) protein is 3-isopropylmalate dehydratase small subunit.